A 407-amino-acid chain; its full sequence is Dephospho-CoA kinase (407 aa).

Residues 3-204 enclose the DPCK domain; sequence RIGLTGGIGA…QPFAHNLAQR (202 aa). Residue 11–16 participates in ATP binding; sequence GAGKSL. The interval 196–407 is UPF0157; sequence PFAHNLAQRQ…EWADAVHWRP (212 aa).

In the N-terminal section; belongs to the CoaE family. This sequence in the C-terminal section; belongs to the UPF0157 (GrpB) family.

Its subcellular location is the cytoplasm. The catalysed reaction is 3'-dephospho-CoA + ATP = ADP + CoA + H(+). It participates in cofactor biosynthesis; coenzyme A biosynthesis; CoA from (R)-pantothenate: step 5/5. Its function is as follows. Catalyzes the phosphorylation of the 3'-hydroxyl group of dephosphocoenzyme A to form coenzyme A. The protein is Dephospho-CoA kinase of Mycobacterium bovis (strain ATCC BAA-935 / AF2122/97).